A 287-amino-acid polypeptide reads, in one-letter code: Nucleotide-binding protein TGRD_433 (287 aa).

ATP is bound at residue 9–16 (GMSGAGKS). 60–63 (DSRA) contacts GTP.

This sequence belongs to the RapZ-like family.

Its function is as follows. Displays ATPase and GTPase activities. This Endomicrobium trichonymphae protein is Nucleotide-binding protein TGRD_433.